The sequence spans 690 residues: Elongation factor G (690 aa).

The tr-type G domain maps to 8–283 (EYIRNIGICA…AVVGFLPSPI (276 aa)). Residues 17-24 (AHIDAGKT), 81-85 (DTPGH), and 135-138 (NKMD) each bind GTP.

Belongs to the TRAFAC class translation factor GTPase superfamily. Classic translation factor GTPase family. EF-G/EF-2 subfamily.

The protein resides in the cytoplasm. Catalyzes the GTP-dependent ribosomal translocation step during translation elongation. During this step, the ribosome changes from the pre-translocational (PRE) to the post-translocational (POST) state as the newly formed A-site-bound peptidyl-tRNA and P-site-bound deacylated tRNA move to the P and E sites, respectively. Catalyzes the coordinated movement of the two tRNA molecules, the mRNA and conformational changes in the ribosome. The polypeptide is Elongation factor G (Rickettsia canadensis (strain McKiel)).